Reading from the N-terminus, the 713-residue chain is Phosphoribosylformylglycinamidine synthase subunit PurL (713 aa).

H32 is a catalytic residue. Residue Y35 participates in ATP binding. E76 is a binding site for Mg(2+). Residues 77–80 and R99 contribute to the substrate site; that span reads SHNH. The active-site Proton acceptor is H78. D100 is a binding site for Mg(2+). A substrate-binding site is contributed by Q224. D252 serves as a coordination point for Mg(2+). 296–298 is a substrate binding site; sequence ESQ. D471 and G508 together coordinate ATP. Position 509 (N509) interacts with Mg(2+). A substrate-binding site is contributed by S511.

The protein belongs to the FGAMS family. Monomer. Part of the FGAM synthase complex composed of 1 PurL, 1 PurQ and 2 PurS subunits.

The protein resides in the cytoplasm. It catalyses the reaction N(2)-formyl-N(1)-(5-phospho-beta-D-ribosyl)glycinamide + L-glutamine + ATP + H2O = 2-formamido-N(1)-(5-O-phospho-beta-D-ribosyl)acetamidine + L-glutamate + ADP + phosphate + H(+). It participates in purine metabolism; IMP biosynthesis via de novo pathway; 5-amino-1-(5-phospho-D-ribosyl)imidazole from N(2)-formyl-N(1)-(5-phospho-D-ribosyl)glycinamide: step 1/2. Its function is as follows. Part of the phosphoribosylformylglycinamidine synthase complex involved in the purines biosynthetic pathway. Catalyzes the ATP-dependent conversion of formylglycinamide ribonucleotide (FGAR) and glutamine to yield formylglycinamidine ribonucleotide (FGAM) and glutamate. The FGAM synthase complex is composed of three subunits. PurQ produces an ammonia molecule by converting glutamine to glutamate. PurL transfers the ammonia molecule to FGAR to form FGAM in an ATP-dependent manner. PurS interacts with PurQ and PurL and is thought to assist in the transfer of the ammonia molecule from PurQ to PurL. This Thermococcus kodakarensis (strain ATCC BAA-918 / JCM 12380 / KOD1) (Pyrococcus kodakaraensis (strain KOD1)) protein is Phosphoribosylformylglycinamidine synthase subunit PurL.